A 292-amino-acid chain; its full sequence is NAD kinase (292 aa).

The active-site Proton acceptor is the D73. NAD(+)-binding positions include D73–G74, N147–E148, H158, R175, D177, T188–S193, and Q247.

This sequence belongs to the NAD kinase family. The cofactor is a divalent metal cation.

The protein localises to the cytoplasm. It carries out the reaction NAD(+) + ATP = ADP + NADP(+) + H(+). In terms of biological role, involved in the regulation of the intracellular balance of NAD and NADP, and is a key enzyme in the biosynthesis of NADP. Catalyzes specifically the phosphorylation on 2'-hydroxyl of the adenosine moiety of NAD to yield NADP. In Sodalis glossinidius (strain morsitans), this protein is NAD kinase.